The sequence spans 164 residues: Protein-export protein SecB (164 aa).

The protein belongs to the SecB family. As to quaternary structure, homotetramer, a dimer of dimers. One homotetramer interacts with 1 SecA dimer.

The protein resides in the cytoplasm. In terms of biological role, one of the proteins required for the normal export of preproteins out of the cell cytoplasm. It is a molecular chaperone that binds to a subset of precursor proteins, maintaining them in a translocation-competent state. It also specifically binds to its receptor SecA. The sequence is that of Protein-export protein SecB from Zymomonas mobilis subsp. mobilis (strain ATCC 31821 / ZM4 / CP4).